Here is a 1013-residue protein sequence, read N- to C-terminus: MKMKIIVLFLYYCYIGSTSSVLASIDNVNELSVLLSVKSTLVDPLNFLKDWKLSDTSDHCNWTGVRCNSNGNVEKLDLAGMNLTGKISDSISQLSSLVSFNISCNGFESLLPKSIPPLKSIDISQNSFSGSLFLFSNESLGLVHLNASGNNLSGNLTEDLGNLVSLEVLDLRGNFFQGSLPSSFKNLQKLRFLGLSGNNLTGELPSVLGQLPSLETAILGYNEFKGPIPPEFGNINSLKYLDLAIGKLSGEIPSELGKLKSLETLLLYENNFTGTIPREIGSITTLKVLDFSDNALTGEIPMEITKLKNLQLLNLMRNKLSGSIPPAISSLAQLQVLELWNNTLSGELPSDLGKNSPLQWLDVSSNSFSGEIPSTLCNKGNLTKLILFNNTFTGQIPATLSTCQSLVRVRMQNNLLNGSIPIGFGKLEKLQRLELAGNRLSGGIPGDISDSVSLSFIDFSRNQIRSSLPSTILSIHNLQAFLVADNFISGEVPDQFQDCPSLSNLDLSSNTLTGTIPSSIASCEKLVSLNLRNNNLTGEIPRQITTMSALAVLDLSNNSLTGVLPESIGTSPALELLNVSYNKLTGPVPINGFLKTINPDDLRGNSGLCGGVLPPCSKFQRATSSHSSLHGKRIVAGWLIGIASVLALGILTIVTRTLYKKWYSNGFCGDETASKGEWPWRLMAFHRLGFTASDILACIKESNMIGMGATGIVYKAEMSRSSTVLAVKKLWRSAADIEDGTTGDFVGEVNLLGKLRHRNIVRLLGFLYNDKNMMIVYEFMLNGNLGDAIHGKNAAGRLLVDWVSRYNIALGVAHGLAYLHHDCHPPVIHRDIKSNNILLDANLDARIADFGLARMMARKKETVSMVAGSYGYIAPEYGYTLKVDEKIDIYSYGVVLLELLTGRRPLEPEFGESVDIVEWVRRKIRDNISLEEALDPNVGNCRYVQEEMLLVLQIALLCTTKLPKDRPSMRDVISMLGEAKPRRKSNSNEENTSRSLAEKHSSVFSTSPVNGLL.

The first 23 residues, 1–23, serve as a signal peptide directing secretion; the sequence is MKMKIIVLFLYYCYIGSTSSVLA. Residues 24–633 are Extracellular-facing; that stretch reads SIDNVNELSV…SSHSSLHGKR (610 aa). Residues Asn61, Asn82, Asn101, Asn137, Asn146, Asn151, and Asn155 are each glycosylated (N-linked (GlcNAc...) asparagine). LRR repeat units lie at residues 70-94, 95-117, 119-137, 139-163, 164-186, 187-213, 215-234, 235-259, 260-283, 284-307, 308-331, 333-355, 357-379, 381-403, 405-426, 427-451, 453-475, 477-498, 499-523, 525-547, 548-571, and 573-595; these read NGNV…ISQL, SSLV…SIPP, KSID…LFSN, SLGL…LGNL, VSLE…SFKN, LQKL…QLPS, ETAI…EFGN, INSL…LGKL, KSLE…IGSI, TTLK…ITKL, KNLQ…ISSL, QLQV…LGKN, PLQW…LCNK, NLTK…LSTC, SLVR…GFGK, LEKL…ISDS, SLSF…ILSI, NLQA…QFQD, CPSL…IASC, KLVS…ITTM, SALA…IGTS, and ALEL…GFLK. An N-linked (GlcNAc...) asparagine glycan is attached at Asn199. An N-linked (GlcNAc...) asparagine glycan is attached at Asn271. The N-linked (GlcNAc...) asparagine glycan is linked to Asn341. N-linked (GlcNAc...) asparagine glycans are attached at residues Asn381, Asn389, and Asn417. N-linked (GlcNAc...) asparagine glycans are attached at residues Asn535, Asn557, and Asn578. Residues 634–654 traverse the membrane as a helical segment; that stretch reads IVAGWLIGIASVLALGILTIV. Over 655–1013 the chain is Cytoplasmic; the sequence is TRTLYKKWYS…FSTSPVNGLL (359 aa). Thr691 carries the phosphothreonine modification. The Protein kinase domain occupies 699–983; it reads IKESNMIGMG…SMLGEAKPRR (285 aa). Residues 705 to 713 and Lys728 contribute to the ATP site; that span reads IGMGATGIV. At Thr710 the chain carries Phosphothreonine; by autocatalysis. A phosphothreonine; by autocatalysis mark is found at Thr741 and Thr742. Residues Tyr777 and Tyr818 each carry the phosphotyrosine modification. Asp831 acts as the Proton acceptor in catalysis. The residue at position 862 (Thr862) is a Phosphothreonine; by autocatalysis. Ser864 carries the post-translational modification Phosphoserine; by autocatalysis. The residue at position 872 (Tyr872) is a Phosphotyrosine. Position 879 is a phosphotyrosine; by autocatalysis (Tyr879). Thr880 and Thr992 each carry phosphothreonine; by autocatalysis. Residues 976–1013 form a disordered region; the sequence is LGEAKPRRKSNSNEENTSRSLAEKHSSVFSTSPVNGLL. A compositionally biased stretch (polar residues) spans 1002–1013; the sequence is SVFSTSPVNGLL.

This sequence belongs to the protein kinase superfamily. Ser/Thr protein kinase family. As to quaternary structure, homodimer. Interacts with MDIS1 and LURE1.2. Post-translationally, autophosphorylation induced by the interaction with LURE1.2. In terms of tissue distribution, expressed in pollen tubes.

The protein resides in the cell membrane. It catalyses the reaction L-seryl-[protein] + ATP = O-phospho-L-seryl-[protein] + ADP + H(+). It carries out the reaction L-threonyl-[protein] + ATP = O-phospho-L-threonyl-[protein] + ADP + H(+). Functionally, involved in the regulation of procambium maintenance and polarity during vascular-tissue development. Involved in the pollen tube perception of the female signal. Phosphorylates MDSI1. In Arabidopsis thaliana (Mouse-ear cress), this protein is MDIS1-interacting receptor like kinase 1.